The sequence spans 225 residues: MNLFDQFLTPSLLGISLLMPALLMTTILLLNPKNQWLSHPTTTIKSWFINQAAKQIMTPINPTGHKHSLILISLLILLSLTNLLGLLPYTFTPTTQLSMNMAIALPLWLVTVLIGLRTQPTTSLAHLLPEGTPMLLIPILILIETISLLIRPIALGVRLTANLTAGHLLIQLISIATLNLWFMMPPLSLLTSTVLILLLLLEFAVAMIQAYVFVLLLSLYLQENS.

Helical transmembrane passes span 10–30, 69–89, 96–116, 135–155, 168–188, and 194–214; these read PSLL…ILLL, LILI…LLPY, QLSM…LIGL, LLIP…PIAL, LLIQ…PPLS, and VLIL…YVFV.

It belongs to the ATPase A chain family. Component of the ATP synthase complex composed at least of ATP5F1A/subunit alpha, ATP5F1B/subunit beta, ATP5MC1/subunit c (homooctomer), MT-ATP6/subunit a, MT-ATP8/subunit 8, ATP5ME/subunit e, ATP5MF/subunit f, ATP5MG/subunit g, ATP5MK/subunit k, ATP5MJ/subunit j, ATP5F1C/subunit gamma, ATP5F1D/subunit delta, ATP5F1E/subunit epsilon, ATP5PF/subunit F6, ATP5PB/subunit b, ATP5PD/subunit d, ATP5PO/subunit OSCP. ATP synthase complex consists of a soluble F(1) head domain (subunits alpha(3) and beta(3)) - the catalytic core - and a membrane F(0) domain - the membrane proton channel (subunits c, a, 8, e, f, g, k and j). These two domains are linked by a central stalk (subunits gamma, delta, and epsilon) rotating inside the F1 region and a stationary peripheral stalk (subunits F6, b, d, and OSCP). Interacts with DNAJC30; interaction is direct.

It localises to the mitochondrion inner membrane. It catalyses the reaction H(+)(in) = H(+)(out). In terms of biological role, subunit a, of the mitochondrial membrane ATP synthase complex (F(1)F(0) ATP synthase or Complex V) that produces ATP from ADP in the presence of a proton gradient across the membrane which is generated by electron transport complexes of the respiratory chain. ATP synthase complex consist of a soluble F(1) head domain - the catalytic core - and a membrane F(1) domain - the membrane proton channel. These two domains are linked by a central stalk rotating inside the F(1) region and a stationary peripheral stalk. During catalysis, ATP synthesis in the catalytic domain of F(1) is coupled via a rotary mechanism of the central stalk subunits to proton translocation. With the subunit c (ATP5MC1), forms the proton-conducting channel in the F(0) domain, that contains two crucial half-channels (inlet and outlet) that facilitate proton movement from the mitochondrial intermembrane space (IMS) into the matrix. Protons are taken up via the inlet half-channel and released through the outlet half-channel, following a Grotthuss mechanism. This Alligator mississippiensis (American alligator) protein is ATP synthase F(0) complex subunit a.